A 232-amino-acid polypeptide reads, in one-letter code: Flagellar L-ring protein (232 aa).

A signal peptide spans M1–G21. C22 carries the N-palmitoyl cysteine lipid modification. A lipid anchor (S-diacylglycerol cysteine) is attached at C22.

The protein belongs to the FlgH family. In terms of assembly, the basal body constitutes a major portion of the flagellar organelle and consists of four rings (L,P,S, and M) mounted on a central rod.

Its subcellular location is the cell outer membrane. The protein resides in the bacterial flagellum basal body. In terms of biological role, assembles around the rod to form the L-ring and probably protects the motor/basal body from shearing forces during rotation. The chain is Flagellar L-ring protein from Escherichia coli O7:K1 (strain IAI39 / ExPEC).